Consider the following 305-residue polypeptide: Elongation factor Ts (305 aa).

The involved in Mg(2+) ion dislocation from EF-Tu stretch occupies residues 81–84; it reads TDFV.

Belongs to the EF-Ts family.

It is found in the cytoplasm. Associates with the EF-Tu.GDP complex and induces the exchange of GDP to GTP. It remains bound to the aminoacyl-tRNA.EF-Tu.GTP complex up to the GTP hydrolysis stage on the ribosome. In Nitratiruptor sp. (strain SB155-2), this protein is Elongation factor Ts.